Reading from the N-terminus, the 567-residue chain is Phenylalanine ammonia-lyase (567 aa).

Tyr78 acts as the Proton donor/acceptor in catalysis. A cross-link (5-imidazolinone (Ala-Gly)) is located at residues 167-169 (ASG). Ser168 carries the 2,3-didehydroalanine (Ser) modification. (E)-cinnamate-binding residues include Asn223, Gln311, Arg317, Asn347, Lys419, Glu448, and Asn451.

Belongs to the PAL/histidase family. As to quaternary structure, homotetramer. In terms of processing, contains an active site 4-methylidene-imidazol-5-one (MIO), which is formed autocatalytically by cyclization and dehydration of residues Ala-Ser-Gly.

It is found in the cytoplasm. It catalyses the reaction L-phenylalanine = (E)-cinnamate + NH4(+). It functions in the pathway phenylpropanoid metabolism; trans-cinnamate biosynthesis; trans-cinnamate from L-phenylalanine: step 1/1. Its function is as follows. Catalyzes the non-oxidative deamination of L-phenylalanine to form trans-cinnamic acid, the first step in the phenylpropanoid pathway. The chain is Phenylalanine ammonia-lyase from Trichormus variabilis (strain ATCC 29413 / PCC 7937) (Anabaena variabilis).